The following is a 185-amino-acid chain: Ribosome-recycling factor (185 aa).

Residues 135–159 form a disordered region; sequence ANDEVKKLEKDKAITEDESKKGQDE.

This sequence belongs to the RRF family.

It is found in the cytoplasm. In terms of biological role, responsible for the release of ribosomes from messenger RNA at the termination of protein biosynthesis. May increase the efficiency of translation by recycling ribosomes from one round of translation to another. This chain is Ribosome-recycling factor, found in Campylobacter curvus (strain 525.92).